A 402-amino-acid polypeptide reads, in one-letter code: Dynactin subunit 2 (402 aa).

Positions 1–24 (MADPKYADLPGIARNEPDVYETSD) are disordered. Ala-2 is modified (N-acetylalanine). Phosphotyrosine is present on Tyr-6. Position 83 is a phosphoserine (Ser-83). Tyr-86 is modified (phosphotyrosine). The stretch at 100–130 (QQKYQRLLHEVQELTTEVEKIKTTVKESATE) forms a coiled coil. Phosphothreonine is present on residues Thr-134 and Thr-199. The segment at 185–205 (KSSKGSSGGKSTGGTPPDSSL) is disordered. A coiled-coil region spans residues 215–247 (EQDKFSQAAKVAELEKRLTELEATVRCDQDAQN). A Phosphoserine modification is found at Ser-321.

Belongs to the dynactin subunit 2 family. In terms of assembly, subunit of dynactin, a multiprotein complex part of a tripartite complex with dynein and a adapter, such as BICDL1, BICD2 or HOOK3. The dynactin complex is built around ACTR1A/ACTB filament and consists of an actin-related filament composed of a shoulder domain, a pointed end and a barbed end. Its length is defined by its flexible shoulder domain. The soulder is composed of 2 DCTN1 subunits, 4 DCTN2 and 2 DCTN3. The 4 DCNT2 (via N-terminus) bind the ACTR1A filament and act as molecular rulers to determine the length. The pointed end is important for binding dynein-dynactin cargo adapters and consists of 4 subunits: ACTR10, DCNT4, DCTN5 and DCTN6. The barbed end is composed of a CAPZA1:CAPZB heterodimers, which binds ACTR1A/ACTB filament and dynactin and stabilizes dynactin. Interacts with BICD2 and CEP135. Interacts with DYNAP. Interacts with ECPAS. Interacts with MAPRE1.

Its subcellular location is the cytoplasm. The protein resides in the cytoskeleton. It is found in the microtubule organizing center. It localises to the centrosome. The protein localises to the membrane. Its function is as follows. Part of the dynactin complex that activates the molecular motor dynein for ultra-processive transport along microtubules. In the dynactin soulder domain, binds the ACTR1A filament and acts as a molecular ruler to determine the length. Modulates cytoplasmic dynein binding to an organelle, and plays a role in prometaphase chromosome alignment and spindle organization during mitosis. Involved in anchoring microtubules to centrosomes. May play a role in synapse formation during brain development. The protein is Dynactin subunit 2 (Dctn2) of Rattus norvegicus (Rat).